The sequence spans 723 residues: Peroxisomal bifunctional enzyme (723 aa).

The tract at residues 1–282 (MAEYTRLHNA…FAERKANKWS (282 aa)) is enoyl-CoA hydratase / isomerase. At K38 the chain carries N6-succinyllysine. G101 contacts substrate. K165 is subject to N6-acetyllysine; alternate. K165 carries the N6-succinyllysine; alternate modification. K171 is modified (N6-acetyllysine). N6-acetyllysine; alternate is present on K219. K219 is modified (N6-succinyllysine; alternate). K250 carries the post-translational modification N6-acetyllysine. N6-succinyllysine occurs at positions 280 and 290. The segment at 283-572 (TPSGASWKTA…DVLCELGRFG (290 aa)) is 3-hydroxyacyl-CoA dehydrogenase. An N6-acetyllysine mark is found at K346, K350, and K464. K532 is modified (N6-succinyllysine). T548 bears the Phosphothreonine mark. The residue at position 577 (K577) is an N6-succinyllysine. An N6-acetyllysine; alternate mark is found at K584, K591, and K710. N6-succinyllysine; alternate is present on residues K584, K591, and K710. S718 carries the post-translational modification Phosphoserine. The short motif at 721 to 723 (SKL) is the Microbody targeting signal element. K722 carries the post-translational modification N6-succinyllysine.

This sequence in the N-terminal section; belongs to the enoyl-CoA hydratase/isomerase family. The protein in the C-terminal section; belongs to the 3-hydroxyacyl-CoA dehydrogenase family. As to quaternary structure, monomer. Post-translationally, acetylated, leading to enhanced enzyme activity. Acetylation is enhanced by up to 80% after treatment either with trichostin A (TSA) or with nicotinamide (NAM) with highest increase on Lys-346. Acetylation and enzyme activity increased by about 1.5% on addition of fatty acids. As to expression, liver and kidney. Strongly expressed in the terminal segments of the proximal tubule. Lower amounts seen in the brain.

Its subcellular location is the peroxisome. The enzyme catalyses a (3S)-3-hydroxyacyl-CoA = a (2E)-enoyl-CoA + H2O. It carries out the reaction a 4-saturated-(3S)-3-hydroxyacyl-CoA = a (3E)-enoyl-CoA + H2O. The catalysed reaction is a (3Z)-enoyl-CoA = a 4-saturated (2E)-enoyl-CoA. It catalyses the reaction a (3E)-enoyl-CoA = a 4-saturated (2E)-enoyl-CoA. The enzyme catalyses a (3S)-3-hydroxyacyl-CoA + NAD(+) = a 3-oxoacyl-CoA + NADH + H(+). It carries out the reaction (2S,3S)-3-hydroxy-2-methylbutanoyl-CoA = (2E)-2-methylbut-2-enoyl-CoA + H2O. The catalysed reaction is (3S)-hydroxyhexadecanoyl-CoA + NAD(+) = 3-oxohexadecanoyl-CoA + NADH + H(+). It catalyses the reaction (3S)-hydroxyhexadecanoyl-CoA = (2E)-hexadecenoyl-CoA + H2O. The enzyme catalyses (2E)-hexadecenedioyl-CoA + H2O = (3S)-hydroxyhexadecanedioyl-CoA. It carries out the reaction (3S)-hydroxyhexadecanedioyl-CoA + NAD(+) = 3-oxohexadecanedioyl-CoA + NADH + H(+). The catalysed reaction is (3E,5Z)-tetradecadienoyl-CoA = (2E,5Z)-tetradecadienoyl-CoA. It catalyses the reaction (3E,5Z)-octadienoyl-CoA = (2E,5Z)-octadienoyl-CoA. The enzyme catalyses (3S)-hydroxydecanoyl-CoA + NAD(+) = 3-oxodecanoyl-CoA + NADH + H(+). It carries out the reaction (3E)-decenoyl-CoA = (2E)-decenoyl-CoA. The catalysed reaction is (3Z)-hexenoyl-CoA = (2E)-hexenoyl-CoA. It catalyses the reaction (3E)-hexenoyl-CoA = (2E)-hexenoyl-CoA. The enzyme catalyses (3S)-hydroxydecanoyl-CoA = (2E)-decenoyl-CoA + H2O. It carries out the reaction (3S)-hydroxyhexanoyl-CoA = (2E)-hexenoyl-CoA + H2O. The protein operates within lipid metabolism; fatty acid beta-oxidation. With respect to regulation, enzyme activity enhanced by acetylation. Peroxisomal trifunctional enzyme possessing 2-enoyl-CoA hydratase, 3-hydroxyacyl-CoA dehydrogenase, and delta 3, delta 2-enoyl-CoA isomerase activities. Catalyzes two of the four reactions of the long chain fatty acids peroxisomal beta-oxidation pathway. Can also use branched-chain fatty acids such as 2-methyl-2E-butenoyl-CoA as a substrate, which is hydrated into (2S,3S)-3-hydroxy-2-methylbutanoyl-CoA. Optimal isomerase for 2,5 double bonds into 3,5 form isomerization in a range of enoyl-CoA species. Also able to isomerize both 3-cis and 3-trans double bonds into the 2-trans form in a range of enoyl-CoA species. With HSD17B4, catalyzes the hydration of trans-2-enoyl-CoA and the dehydrogenation of 3-hydroxyacyl-CoA, but with opposite chiral specificity. Regulates the amount of medium-chain dicarboxylic fatty acids which are essential regulators of all fatty acid oxidation pathways. Also involved in the degradation of long-chain dicarboxylic acids through peroxisomal beta-oxidation. This Homo sapiens (Human) protein is Peroxisomal bifunctional enzyme.